The sequence spans 357 residues: Holliday junction branch migration complex subunit RuvB (357 aa).

Positions Trp3–Tyr193 are large ATPase domain (RuvB-L). Residues Leu32, Arg33, Gly74, Lys77, Thr78, Thr79, Glu140–Phe142, Arg183, Tyr193, and Arg230 each bind ATP. Thr78 is a Mg(2+) binding site. Residues Gly194–Glu264 are small ATPAse domain (RuvB-S). Residues Ala267 to Ala357 are head domain (RuvB-H). Arg303, Arg322, and Arg327 together coordinate DNA. The interval Leu337–Ala357 is disordered.

The protein belongs to the RuvB family. Homohexamer. Forms an RuvA(8)-RuvB(12)-Holliday junction (HJ) complex. HJ DNA is sandwiched between 2 RuvA tetramers; dsDNA enters through RuvA and exits via RuvB. An RuvB hexamer assembles on each DNA strand where it exits the tetramer. Each RuvB hexamer is contacted by two RuvA subunits (via domain III) on 2 adjacent RuvB subunits; this complex drives branch migration. In the full resolvosome a probable DNA-RuvA(4)-RuvB(12)-RuvC(2) complex forms which resolves the HJ.

The protein localises to the cytoplasm. It catalyses the reaction ATP + H2O = ADP + phosphate + H(+). Functionally, the RuvA-RuvB-RuvC complex processes Holliday junction (HJ) DNA during genetic recombination and DNA repair, while the RuvA-RuvB complex plays an important role in the rescue of blocked DNA replication forks via replication fork reversal (RFR). RuvA specifically binds to HJ cruciform DNA, conferring on it an open structure. The RuvB hexamer acts as an ATP-dependent pump, pulling dsDNA into and through the RuvAB complex. RuvB forms 2 homohexamers on either side of HJ DNA bound by 1 or 2 RuvA tetramers; 4 subunits per hexamer contact DNA at a time. Coordinated motions by a converter formed by DNA-disengaged RuvB subunits stimulates ATP hydrolysis and nucleotide exchange. Immobilization of the converter enables RuvB to convert the ATP-contained energy into a lever motion, pulling 2 nucleotides of DNA out of the RuvA tetramer per ATP hydrolyzed, thus driving DNA branch migration. The RuvB motors rotate together with the DNA substrate, which together with the progressing nucleotide cycle form the mechanistic basis for DNA recombination by continuous HJ branch migration. Branch migration allows RuvC to scan DNA until it finds its consensus sequence, where it cleaves and resolves cruciform DNA. The chain is Holliday junction branch migration complex subunit RuvB from Streptomyces coelicolor (strain ATCC BAA-471 / A3(2) / M145).